A 204-amino-acid chain; its full sequence is MLTLALPKGRLAEETALLLLSKGWLKNLPSEGSKELTYVSEDKRIRLLFVRSQDVCTYVEEAAADVGIVGWDIIREGGFDLIAPVDLKLGACRLSLASFPDFDLFAKRSKVRVATKYPNLTREYFFSKGISCEIIKLYGSIELAPIVGLSDCIVDLVSTGGTLKANGLKEFESILFSTARLVSNRSSFYHKHAELRSLIESLEN.

It belongs to the ATP phosphoribosyltransferase family. Short subfamily. In terms of assembly, heteromultimer composed of HisG and HisZ subunits.

It localises to the cytoplasm. The enzyme catalyses 1-(5-phospho-beta-D-ribosyl)-ATP + diphosphate = 5-phospho-alpha-D-ribose 1-diphosphate + ATP. Its pathway is amino-acid biosynthesis; L-histidine biosynthesis; L-histidine from 5-phospho-alpha-D-ribose 1-diphosphate: step 1/9. Its function is as follows. Catalyzes the condensation of ATP and 5-phosphoribose 1-diphosphate to form N'-(5'-phosphoribosyl)-ATP (PR-ATP). Has a crucial role in the pathway because the rate of histidine biosynthesis seems to be controlled primarily by regulation of HisG enzymatic activity. The protein is ATP phosphoribosyltransferase of Leptospira biflexa serovar Patoc (strain Patoc 1 / Ames).